We begin with the raw amino-acid sequence, 200 residues long: Putative TLC domain-containing protein L438 (200 aa).

The region spanning 1–193 (MDYKQSNLFL…ILKILRAKLF (193 aa)) is the TLC domain. The next 6 membrane-spanning stretches (helical) occupy residues 9-29 (FLFP…CGTF), 43-63 (THGI…LMIV), 74-94 (VHHF…YYLI), 96-116 (YLFA…AIKY), 131-151 (LAFF…LWFV), and 165-185 (YLIV…YRIL).

It is found in the membrane. This Acanthamoeba polyphaga mimivirus (APMV) protein is Putative TLC domain-containing protein L438.